Consider the following 399-residue polypeptide: CCA-adding enzyme (399 aa).

Gly32 and Arg35 together coordinate ATP. The CTP site is built by Gly32 and Arg35. 2 residues coordinate Mg(2+): Asp45 and Asp47. Residues Arg116, Asp159, Arg162, Arg165, and Arg168 each contribute to the ATP site. CTP is bound by residues Arg116, Asp159, Arg162, Arg165, and Arg168.

Belongs to the tRNA nucleotidyltransferase/poly(A) polymerase family. Bacterial CCA-adding enzyme type 3 subfamily. In terms of assembly, homodimer. Mg(2+) is required as a cofactor.

It catalyses the reaction a tRNA precursor + 2 CTP + ATP = a tRNA with a 3' CCA end + 3 diphosphate. It carries out the reaction a tRNA with a 3' CCA end + 2 CTP + ATP = a tRNA with a 3' CCACCA end + 3 diphosphate. In terms of biological role, catalyzes the addition and repair of the essential 3'-terminal CCA sequence in tRNAs without using a nucleic acid template. Adds these three nucleotides in the order of C, C, and A to the tRNA nucleotide-73, using CTP and ATP as substrates and producing inorganic pyrophosphate. tRNA 3'-terminal CCA addition is required both for tRNA processing and repair. Also involved in tRNA surveillance by mediating tandem CCA addition to generate a CCACCA at the 3' terminus of unstable tRNAs. While stable tRNAs receive only 3'-terminal CCA, unstable tRNAs are marked with CCACCA and rapidly degraded. The chain is CCA-adding enzyme from Streptococcus pneumoniae (strain CGSP14).